The primary structure comprises 188 residues: ATP synthase subunit delta (188 aa).

The protein belongs to the ATPase delta chain family. F-type ATPases have 2 components, F(1) - the catalytic core - and F(0) - the membrane proton channel. F(1) has five subunits: alpha(3), beta(3), gamma(1), delta(1), epsilon(1). F(0) has three main subunits: a(1), b(2) and c(10-14). The alpha and beta chains form an alternating ring which encloses part of the gamma chain. F(1) is attached to F(0) by a central stalk formed by the gamma and epsilon chains, while a peripheral stalk is formed by the delta and b chains.

It localises to the cell membrane. F(1)F(0) ATP synthase produces ATP from ADP in the presence of a proton or sodium gradient. F-type ATPases consist of two structural domains, F(1) containing the extramembraneous catalytic core and F(0) containing the membrane proton channel, linked together by a central stalk and a peripheral stalk. During catalysis, ATP synthesis in the catalytic domain of F(1) is coupled via a rotary mechanism of the central stalk subunits to proton translocation. In terms of biological role, this protein is part of the stalk that links CF(0) to CF(1). It either transmits conformational changes from CF(0) to CF(1) or is implicated in proton conduction. This Malacoplasma penetrans (strain HF-2) (Mycoplasma penetrans) protein is ATP synthase subunit delta.